A 590-amino-acid chain; its full sequence is Suprabasin (590 aa).

A signal peptide spans 1–25 (MHLARLVGSCSLLLLLGALSGWAAS). Disordered regions lie at residues 182–213 (GNEA…AHHG), 242–266 (FGQG…GVHH), 297–338 (GQGA…GVHH), and 545–570 (LNGN…SGAS). Composition is skewed to low complexity over residues 190–200 (QGVHHAAGQAG), 243–254 (GQGAHHAAGQAG), 297–330 (GQGA…NEAG), and 546–559 (NGNH…HQGG). Over residues 560–570 (ATTTPLASGAS) the composition is skewed to polar residues.

As to expression, detected in thymus, uterus and esophagus.

It localises to the secreted. The chain is Suprabasin (SBSN) from Homo sapiens (Human).